Here is a 274-residue protein sequence, read N- to C-terminus: 2,3,4,5-tetrahydropyridine-2,6-dicarboxylate N-succinyltransferase (274 aa).

2 residues coordinate substrate: Arg104 and Asp141.

The protein belongs to the transferase hexapeptide repeat family. In terms of assembly, homotrimer.

The protein localises to the cytoplasm. The catalysed reaction is (S)-2,3,4,5-tetrahydrodipicolinate + succinyl-CoA + H2O = (S)-2-succinylamino-6-oxoheptanedioate + CoA. The protein operates within amino-acid biosynthesis; L-lysine biosynthesis via DAP pathway; LL-2,6-diaminopimelate from (S)-tetrahydrodipicolinate (succinylase route): step 1/3. In Buchnera aphidicola subsp. Acyrthosiphon pisum (strain APS) (Acyrthosiphon pisum symbiotic bacterium), this protein is 2,3,4,5-tetrahydropyridine-2,6-dicarboxylate N-succinyltransferase.